Consider the following 81-residue polypeptide: Photosystem I iron-sulfur center (81 aa).

2 4Fe-4S ferredoxin-type domains span residues 2–31 and 37–68; these read SHAV…MVPW and GQIA…IRVY. [4Fe-4S] cluster is bound by residues cysteine 11, cysteine 14, cysteine 17, cysteine 21, cysteine 48, cysteine 51, cysteine 54, and cysteine 58.

The cyanobacterial PSI reaction center is composed of one copy each of PsaA,B,C,D,E,F,I,J,K,L,M and X, and forms trimeric complexes. It depends on [4Fe-4S] cluster as a cofactor.

The protein localises to the cellular thylakoid membrane. The catalysed reaction is reduced [plastocyanin] + hnu + oxidized [2Fe-2S]-[ferredoxin] = oxidized [plastocyanin] + reduced [2Fe-2S]-[ferredoxin]. In terms of biological role, apoprotein for the two 4Fe-4S centers FA and FB of photosystem I (PSI); essential for photochemical activity. FB is the terminal electron acceptor of PSI, donating electrons to ferredoxin. The C-terminus interacts with PsaA/B/D and helps assemble the protein into the PSI complex. Required for binding of PsaD and PsaE to PSI. PSI is a plastocyanin/cytochrome c6-ferredoxin oxidoreductase, converting photonic excitation into a charge separation, which transfers an electron from the donor P700 chlorophyll pair to the spectroscopically characterized acceptors A0, A1, FX, FA and FB in turn. The polypeptide is Photosystem I iron-sulfur center (Synechococcus sp. (strain WH7803)).